Here is a 484-residue protein sequence, read N- to C-terminus: Pyruvate kinase (484 aa).

Substrate is bound at residue Arg-33. Residues Asn-35, Ser-37, Asp-67, and Thr-68 each coordinate K(+). 35–38 contributes to the ATP binding site; it reads NFSH. ATP-binding residues include Arg-74 and Lys-155. A Mg(2+)-binding site is contributed by Glu-221. Residues Gly-244, Asp-245, and Thr-277 each coordinate substrate. Residue Asp-245 participates in Mg(2+) binding.

It belongs to the pyruvate kinase family. Homotetramer. Requires Mg(2+) as cofactor. K(+) serves as cofactor.

It carries out the reaction pyruvate + ATP = phosphoenolpyruvate + ADP + H(+). It participates in carbohydrate degradation; glycolysis; pyruvate from D-glyceraldehyde 3-phosphate: step 5/5. This chain is Pyruvate kinase (pyk), found in Chlamydia pneumoniae (Chlamydophila pneumoniae).